The sequence spans 78 residues: Acyl carrier protein (78 aa).

The Carrier domain maps to 2 to 77 (SSIEERVKKI…QATSYVEANL (76 aa)). Position 37 is an O-(pantetheine 4'-phosphoryl)serine (serine 37).

Belongs to the acyl carrier protein (ACP) family. In terms of processing, 4'-phosphopantetheine is transferred from CoA to a specific serine of apo-ACP by AcpS. This modification is essential for activity because fatty acids are bound in thioester linkage to the sulfhydryl of the prosthetic group.

It is found in the cytoplasm. The protein operates within lipid metabolism; fatty acid biosynthesis. Functionally, carrier of the growing fatty acid chain in fatty acid biosynthesis. This is Acyl carrier protein from Hydrogenovibrio crunogenus (strain DSM 25203 / XCL-2) (Thiomicrospira crunogena).